Consider the following 45-residue polypeptide: Photosystem II reaction center protein K (45 aa).

The propeptide occupies 1-8 (MDFALLLA). Residues 24–44 (LPLIPLFFLLLAFVWQAAVGF) traverse the membrane as a helical segment.

This sequence belongs to the PsbK family. PSII is composed of 1 copy each of membrane proteins PsbA, PsbB, PsbC, PsbD, PsbE, PsbF, PsbH, PsbI, PsbJ, PsbK, PsbL, PsbM, PsbT, PsbX, PsbY, PsbZ, Psb30/Ycf12, peripheral proteins PsbO, CyanoQ (PsbQ), PsbU, PsbV and a large number of cofactors. It forms dimeric complexes.

It localises to the cellular thylakoid membrane. In terms of biological role, one of the components of the core complex of photosystem II (PSII). PSII is a light-driven water:plastoquinone oxidoreductase that uses light energy to abstract electrons from H(2)O, generating O(2) and a proton gradient subsequently used for ATP formation. It consists of a core antenna complex that captures photons, and an electron transfer chain that converts photonic excitation into a charge separation. This Gloeothece citriformis (strain PCC 7424) (Cyanothece sp. (strain PCC 7424)) protein is Photosystem II reaction center protein K.